A 1088-amino-acid polypeptide reads, in one-letter code: Serine/threonine-protein kinase LATS2 (1088 aa).

Residues 24 to 49 (EGLKQPSKSSVQGLPAGPNSDTSLDA) form a disordered region. Phosphoserine; by AURKA is present on serine 83. The 42-residue stretch at 98 to 139 (EVNRQMLQELVNAGCDQEMAGRALKQTGSRSIEAALEYISKM) folds into the UBA domain. Residues 101–141 (RQMLQELVNAGCDQEMAGRALKQTGSRSIEAALEYISKMGY) are interaction with ubiquitinated AMOTL2. Over residues 271-280 (RSPSFQSKTP) the composition is skewed to polar residues. Residues 271-323 (RSPSFQSKTPPETGGYASLPTKGQGGPPGAGLAFPPPAAGLYVPHPHHKQAGP) are disordered. Residue threonine 279 is modified to Phosphothreonine. Serine 380 carries the post-translational modification Phosphoserine. Disordered regions lie at residues 383-428 (KPGL…SLPA) and 454-483 (PQTA…AAEG). Residues 404 to 413 (SRTNSFNSHQ) show a composition bias toward polar residues. A compositionally biased stretch (pro residues) spans 466-478 (VPAPAPAPAPAPA). The PPxY motif signature appears at 515 to 518 (PPPY). Residues 543 to 592 (SLRAGPNEPEGGDKSRKSAKGDKGGKDKKQIQTSPVPVRKNSRDEEKRES) are disordered. The segment covering 553 to 572 (GGDKSRKSAKGDKGGKDKKQ) has biased composition (basic and acidic residues). Phosphoserine is present on serine 576. Over residues 583–592 (NSRDEEKRES) the composition is skewed to basic and acidic residues. Residues 668–973 (FVKIKTLGIG…ADDLKAHPFF (306 aa)) enclose the Protein kinase domain. ATP is bound by residues 674-682 (LGIGAFGEV) and lysine 697. Catalysis depends on aspartate 791, which acts as the Proton acceptor. Residues 974 to 1052 (SAIDFSSDIR…RRFFDDNGYP (79 aa)) enclose the AGC-kinase C-terminal domain. Residues 994–1022 (SHPMDTSNFDPVDEESPWNDASEGSTKAW) are disordered. Threonine 1041 is subject to Phosphothreonine. Residues 1056-1088 (PKPSGAEASQAESSDLESSDLVDQTEGCQPVYV) form a disordered region.

This sequence belongs to the protein kinase superfamily. AGC Ser/Thr protein kinase family. In terms of assembly, interacts with and is phosphorylated by AURKA. Binds to AR. Interacts with AJUBA during mitosis and this complex regulates organization of the spindle apparatus through recruitment of gamma-tubulin to the centrosome. Interacts (via PPxY motif) with YAP1 (via WW domains). Interacts with MOB1A and MOB1B. Interacts with LIMD1, WTIP and AJUBA. Interacts with SNAI1. Interacts with WWC1, WWC2 and WWC3 (via their WW domains). Interacts (via UBA domain) with ubiquitinated AMOTL2; the interaction promotes LATS2 phosphorylation of YAP1. Requires Mg(2+) as cofactor. In terms of processing, autophosphorylated and phosphorylated during M-phase and the G1/S-phase of the cell cycle. Phosphorylated and activated by STK3/MST2. Phosphorylated by MAP4Ks; in parallel to STK3/MST2 and resulting to its activation. Phosphorylation by NUAK2 may regulate its activity in phosphorylation and inactivation YAP1. Expressed at high levels in heart and skeletal muscle and at lower levels in all other tissues examined.

It localises to the cytoplasm. The protein resides in the cytoskeleton. The protein localises to the microtubule organizing center. It is found in the centrosome. Its subcellular location is the spindle pole. It localises to the nucleus. It carries out the reaction L-seryl-[protein] + ATP = O-phospho-L-seryl-[protein] + ADP + H(+). It catalyses the reaction L-threonyl-[protein] + ATP = O-phospho-L-threonyl-[protein] + ADP + H(+). In terms of biological role, negative regulator of YAP1 in the Hippo signaling pathway that plays a pivotal role in organ size control and tumor suppression by restricting proliferation and promoting apoptosis. The core of this pathway is composed of a kinase cascade wherein STK3/MST2 and STK4/MST1, in complex with its regulatory protein SAV1, phosphorylates and activates LATS1/2 in complex with its regulatory protein MOB1, which in turn phosphorylates and inactivates YAP1 oncoprotein and WWTR1/TAZ. Phosphorylation of YAP1 by LATS2 inhibits its translocation into the nucleus to regulate cellular genes important for cell proliferation, cell death, and cell migration. Also phosphorylates YAP1 in response to cell contact inhibition-driven WWP1 ubiquitination of AMOTL2, which results in LATS2 activation. Acts as a tumor suppressor which plays a critical role in centrosome duplication, maintenance of mitotic fidelity and genomic stability. Negatively regulates G1/S transition by down-regulating cyclin E/CDK2 kinase activity. Negative regulator of the androgen receptor. Phosphorylates SNAI1 in the nucleus leading to its nuclear retention and stabilization, which enhances its epithelial-mesenchymal transition and tumor cell invasion/migration activities. This tumor-promoting activity is independent of its effects upon YAP1 or WWTR1/TAZ. Acts as an activator of the NLRP3 inflammasome by mediating phosphorylation of 'Ser-265' of NLRP3 following NLRP3 palmitoylation, promoting NLRP3 activation by NEK7. The sequence is that of Serine/threonine-protein kinase LATS2 from Homo sapiens (Human).